The sequence spans 215 residues: uncharacterized protein (215 aa).

Transmembrane regions (helical) follow at residues 3–23 (LLAYIPTNVLATYLTLVLRSI), 30–50 (ANLLAIPNFVLHILLLFGLTW), 59–79 (LGLSLLQPLYTVPLLAVLRFW), 87–107 (WGTYAIITLILDNPYIHAICV), 122–142 (VSTCLYNMFVQAGLIISSNIY), and 156–176 (VLFGLALFMFPILIGSKLIYV).

This sequence belongs to the major facilitator superfamily. Allantoate permease family.

It localises to the membrane. This is an uncharacterized protein from Saccharomyces cerevisiae (strain ATCC 204508 / S288c) (Baker's yeast).